The following is a 108-amino-acid chain: ATP synthase peripheral stalk subunit F6, mitochondrial (108 aa).

The N-terminal 32 residues, 1–32 (MILQRLFRLSSAVQSAISVSWRRNIGITAVAF), are a transit peptide targeting the mitochondrion. Lys-41, Lys-46, and Lys-79 each carry N6-acetyllysine. Lys-84 and Lys-99 each carry N6-acetyllysine; alternate. Lys-84 and Lys-99 each carry N6-succinyllysine; alternate. N6-acetyllysine is present on Lys-105. Ser-108 carries the phosphoserine modification.

It belongs to the eukaryotic ATPase subunit F6 family. In terms of assembly, component of the ATP synthase complex composed at least of ATP5F1A/subunit alpha, ATP5F1B/subunit beta, ATP5MC1/subunit c (homooctomer), MT-ATP6/subunit a, MT-ATP8/subunit 8, ATP5ME/subunit e, ATP5MF/subunit f, ATP5MG/subunit g, ATP5MK/subunit k, ATP5MJ/subunit j, ATP5F1C/subunit gamma, ATP5F1D/subunit delta, ATP5F1E/subunit epsilon, ATP5PF/subunit F6, ATP5PB/subunit b, ATP5PD/subunit d, ATP5PO/subunit OSCP. ATP synthase complex consists of a soluble F(1) head domain (subunits alpha(3) and beta(3)) - the catalytic core - and a membrane F(0) domain - the membrane proton channel (subunits c, a, 8, e, f, g, k and j). These two domains are linked by a central stalk (subunits gamma, delta, and epsilon) rotating inside the F1 region and a stationary peripheral stalk (subunits F6, b, d, and OSCP).

The protein resides in the mitochondrion. It localises to the mitochondrion inner membrane. Functionally, subunit F6, of the mitochondrial membrane ATP synthase complex (F(1)F(0) ATP synthase or Complex V) that produces ATP from ADP in the presence of a proton gradient across the membrane which is generated by electron transport complexes of the respiratory chain. ATP synthase complex consist of a soluble F(1) head domain - the catalytic core - and a membrane F(1) domain - the membrane proton channel. These two domains are linked by a central stalk rotating inside the F(1) region and a stationary peripheral stalk. During catalysis, ATP synthesis in the catalytic domain of F(1) is coupled via a rotary mechanism of the central stalk subunits to proton translocation. In vivo, can only synthesize ATP although its ATP hydrolase activity can be activated artificially in vitro. Part of the complex F(0) domain. Part of the complex F(0) domain and the peripheric stalk, which acts as a stator to hold the catalytic alpha(3)beta(3) subcomplex and subunit a/ATP6 static relative to the rotary elements. This Bos taurus (Bovine) protein is ATP synthase peripheral stalk subunit F6, mitochondrial.